The following is a 196-amino-acid chain: Anthranilate synthase component 2 (196 aa).

The 194-residue stretch at 3 to 196 folds into the Glutamine amidotransferase type-1 domain; sequence NILLLDNFDS…INWASLKYKG (194 aa). 57-59 serves as a coordination point for L-glutamine; it reads GPS. Cys84 serves as the catalytic Nucleophile; for GATase activity. Residues Gln88 and 134–135 each bind L-glutamine; that span reads SL. Residues His170 and Glu172 each act as for GATase activity in the active site.

As to quaternary structure, heterotetramer consisting of two non-identical subunits: a beta subunit (TrpG) and a large alpha subunit (TrpE).

The enzyme catalyses chorismate + L-glutamine = anthranilate + pyruvate + L-glutamate + H(+). It functions in the pathway amino-acid biosynthesis; L-tryptophan biosynthesis; L-tryptophan from chorismate: step 1/5. Its function is as follows. Part of a heterotetrameric complex that catalyzes the two-step biosynthesis of anthranilate, an intermediate in the biosynthesis of L-tryptophan. In the first step, the glutamine-binding beta subunit (TrpG) of anthranilate synthase (AS) provides the glutamine amidotransferase activity which generates ammonia as a substrate that, along with chorismate, is used in the second step, catalyzed by the large alpha subunit of AS (TrpE) to produce anthranilate. In the absence of TrpG, TrpE can synthesize anthranilate directly from chorismate and high concentrations of ammonia. This chain is Anthranilate synthase component 2 (trpG), found in Buchnera aphidicola subsp. Schizaphis graminum (strain Sg).